Reading from the N-terminus, the 468-residue chain is uncharacterized protein (468 aa).

The tract at residues 447-468 (AVHVSNGDKPKVALPDTQLGSH) is disordered.

The protein belongs to the mycobacterial PPE family.

This is an uncharacterized protein from Mycobacterium tuberculosis (strain ATCC 25618 / H37Rv).